Here is a 270-residue protein sequence, read N- to C-terminus: 4-hydroxy-tetrahydrodipicolinate reductase (270 aa).

NAD(+)-binding positions include 9 to 14 and Glu-35; that span reads GAGGRM. Position 36 (Arg-36) interacts with NADP(+). Residues 99 to 101 and 123 to 126 contribute to the NAD(+) site; these read GTT and ASNY. The Proton donor/acceptor role is filled by His-156. His-157 serves as a coordination point for (S)-2,3,4,5-tetrahydrodipicolinate. Lys-160 acts as the Proton donor in catalysis. 166–167 serves as a coordination point for (S)-2,3,4,5-tetrahydrodipicolinate; that stretch reads GT.

Belongs to the DapB family.

Its subcellular location is the cytoplasm. The catalysed reaction is (S)-2,3,4,5-tetrahydrodipicolinate + NAD(+) + H2O = (2S,4S)-4-hydroxy-2,3,4,5-tetrahydrodipicolinate + NADH + H(+). It carries out the reaction (S)-2,3,4,5-tetrahydrodipicolinate + NADP(+) + H2O = (2S,4S)-4-hydroxy-2,3,4,5-tetrahydrodipicolinate + NADPH + H(+). It functions in the pathway amino-acid biosynthesis; L-lysine biosynthesis via DAP pathway; (S)-tetrahydrodipicolinate from L-aspartate: step 4/4. In terms of biological role, catalyzes the conversion of 4-hydroxy-tetrahydrodipicolinate (HTPA) to tetrahydrodipicolinate. The sequence is that of 4-hydroxy-tetrahydrodipicolinate reductase from Actinobacillus succinogenes (strain ATCC 55618 / DSM 22257 / CCUG 43843 / 130Z).